Consider the following 320-residue polypeptide: o-succinylbenzoate synthase (320 aa).

Lys133 functions as the Proton donor in the catalytic mechanism. Asp161, Glu190, and Asp213 together coordinate Mg(2+). The Proton acceptor role is filled by Lys235.

Belongs to the mandelate racemase/muconate lactonizing enzyme family. MenC type 1 subfamily. Requires a divalent metal cation as cofactor.

The enzyme catalyses (1R,6R)-6-hydroxy-2-succinyl-cyclohexa-2,4-diene-1-carboxylate = 2-succinylbenzoate + H2O. It functions in the pathway quinol/quinone metabolism; 1,4-dihydroxy-2-naphthoate biosynthesis; 1,4-dihydroxy-2-naphthoate from chorismate: step 4/7. Its pathway is quinol/quinone metabolism; menaquinone biosynthesis. Converts 2-succinyl-6-hydroxy-2,4-cyclohexadiene-1-carboxylate (SHCHC) to 2-succinylbenzoate (OSB). The chain is o-succinylbenzoate synthase from Citrobacter koseri (strain ATCC BAA-895 / CDC 4225-83 / SGSC4696).